The chain runs to 463 residues: V-type ATP synthase beta chain (463 aa).

The protein belongs to the ATPase alpha/beta chains family.

Its function is as follows. Produces ATP from ADP in the presence of a proton gradient across the membrane. The V-type beta chain is a regulatory subunit. The sequence is that of V-type ATP synthase beta chain from Halothermothrix orenii (strain H 168 / OCM 544 / DSM 9562).